A 777-amino-acid polypeptide reads, in one-letter code: Ribosome biogenesis protein ERB1 (777 aa).

The tract at residues 1–122 is disordered; it reads MAPTAPAKKR…RPNYRVVEDA (122 aa). Residues 36-67 are compositionally biased toward acidic residues; that stretch reads SEDDSDFVASGDEDEEDEDEDEDEDKDEDDEH. WD repeat units follow at residues 430–469, 473–513, 562–604, 606–645, 648–687, 691–731, and 747–777; these read GHEG…QVWA, SSDE…PEVE, TVRS…SQIP, RKLS…LVKV, PGAR…RPYK, FHPQ…DLME, and VDSL…RLWM.

Belongs to the WD repeat BOP1/ERB1 family. In terms of assembly, component of the NOP7 complex, composed of ERB1, NOP7 and YTM1. The complex is held together by ERB1, which interacts with NOP7 via its N-terminal domain and with YTM1 via a high-affinity interaction between the seven-bladed beta-propeller domains of the 2 proteins. The NOP7 complex associates with the 66S pre-ribosome.

The protein resides in the nucleus. Its subcellular location is the nucleolus. It is found in the nucleoplasm. Functionally, component of the NOP7 complex, which is required for maturation of the 25S and 5.8S ribosomal RNAs and formation of the 60S ribosome. The protein is Ribosome biogenesis protein ERB1 of Pyricularia oryzae (strain 70-15 / ATCC MYA-4617 / FGSC 8958) (Rice blast fungus).